Here is a 123-residue protein sequence, read N- to C-terminus: Small ribosomal subunit protein uS12cz/uS12cy (123 aa).

This sequence belongs to the universal ribosomal protein uS12 family. In terms of assembly, part of the 30S ribosomal subunit.

The protein localises to the plastid. The protein resides in the chloroplast. With S4 and S5 plays an important role in translational accuracy. Located at the interface of the 30S and 50S subunits. The protein is Small ribosomal subunit protein uS12cz/uS12cy (rps12-A) of Gossypium hirsutum (Upland cotton).